We begin with the raw amino-acid sequence, 306 residues long: 26S proteasome regulatory subunit RPN11 (306 aa).

The region spanning Val-27–Gly-162 is the MPN domain. 3 residues coordinate Zn(2+): His-109, His-111, and Asp-122. A JAMM motif motif is present at residues His-109–Asp-122.

This sequence belongs to the peptidase M67A family.

Functionally, acts as a regulatory subunit of the 26 proteasome which is involved in the ATP-dependent degradation of ubiquitinated proteins. The protein is 26S proteasome regulatory subunit RPN11 (RPN11) of Candida glabrata (strain ATCC 2001 / BCRC 20586 / JCM 3761 / NBRC 0622 / NRRL Y-65 / CBS 138) (Yeast).